The sequence spans 104 residues: UPF0235 protein M446_3939 (104 aa).

This sequence belongs to the UPF0235 family.

The polypeptide is UPF0235 protein M446_3939 (Methylobacterium sp. (strain 4-46)).